Here is a 307-residue protein sequence, read N- to C-terminus: Methionyl-tRNA formyltransferase (307 aa).

108 to 111 contributes to the (6S)-5,6,7,8-tetrahydrofolate binding site; sequence SLLP.

This sequence belongs to the Fmt family.

The enzyme catalyses L-methionyl-tRNA(fMet) + (6R)-10-formyltetrahydrofolate = N-formyl-L-methionyl-tRNA(fMet) + (6S)-5,6,7,8-tetrahydrofolate + H(+). In terms of biological role, attaches a formyl group to the free amino group of methionyl-tRNA(fMet). The formyl group appears to play a dual role in the initiator identity of N-formylmethionyl-tRNA by promoting its recognition by IF2 and preventing the misappropriation of this tRNA by the elongation apparatus. The polypeptide is Methionyl-tRNA formyltransferase (Xanthomonas oryzae pv. oryzae (strain MAFF 311018)).